The primary structure comprises 435 residues: Trigger factor (435 aa).

In terms of domain architecture, PPIase FKBP-type spans 161 to 246 (DDQVTLDFEG…LTKVEEQILP (86 aa)).

The protein belongs to the FKBP-type PPIase family. Tig subfamily.

It localises to the cytoplasm. The catalysed reaction is [protein]-peptidylproline (omega=180) = [protein]-peptidylproline (omega=0). Functionally, involved in protein export. Acts as a chaperone by maintaining the newly synthesized protein in an open conformation. Functions as a peptidyl-prolyl cis-trans isomerase. This chain is Trigger factor, found in Psychromonas ingrahamii (strain DSM 17664 / CCUG 51855 / 37).